We begin with the raw amino-acid sequence, 592 residues long: Condensin-2 complex subunit H2 (592 aa).

2 disordered regions span residues asparagine 89 to glutamate 116 and glutamate 261 to leucine 285. Residues glycine 96–serine 108 are compositionally biased toward polar residues.

This sequence belongs to the CND2 H2 (condensin-2 subunit 2) family. Component of the condensin-2 complex, which contains the smc2 and smc4 heterodimer, and three non SMC subunits, ncapg2, ncaph2 and ncapd3 that probably regulate the complex.

The protein localises to the nucleus. In terms of biological role, regulatory subunit of the condensin-2 complex, a complex that seems to provide chromosomes with an additional level of organization and rigidity and in establishing mitotic chromosome architecture. This Danio rerio (Zebrafish) protein is Condensin-2 complex subunit H2 (ncaph2).